The sequence spans 339 residues: DNA-directed RNA polymerase subunit alpha (339 aa).

The tract at residues 1-235 (MVIQKNWQEL…DQLQIFVNFE (235 aa)) is alpha N-terminal domain (alpha-NTD). Positions 251–339 (FNPALLKKVD…DLAKRFEEHY (89 aa)) are alpha C-terminal domain (alpha-CTD).

Belongs to the RNA polymerase alpha chain family. In terms of assembly, homodimer. The RNAP catalytic core consists of 2 alpha, 1 beta, 1 beta' and 1 omega subunit. When a sigma factor is associated with the core the holoenzyme is formed, which can initiate transcription.

It carries out the reaction RNA(n) + a ribonucleoside 5'-triphosphate = RNA(n+1) + diphosphate. Its function is as follows. DNA-dependent RNA polymerase catalyzes the transcription of DNA into RNA using the four ribonucleoside triphosphates as substrates. The chain is DNA-directed RNA polymerase subunit alpha from Methylobacterium nodulans (strain LMG 21967 / CNCM I-2342 / ORS 2060).